We begin with the raw amino-acid sequence, 684 residues long: Collagen alpha-3(IX) chain (684 aa).

Residues 1–25 form the signal peptide; it reads MAGPRACAPLLLLLLLGELLAAAGA. Disordered stretches follow at residues 26 to 521 and 548 to 665; these read QRVG…KEAS and LAPG…CDTS. The segment at 29-519 is triple-helical region 3 (COL3); sequence GLPGPPGPPG…TGKPGVPGKE (491 aa). 2 stretches are compositionally biased toward pro residues: residues 31-42 and 55-64; these read PGPPGPPGPPGK and PGLPGPPGPK. A compositionally biased stretch (low complexity) spans 66–82; it reads APGKPGKPGEAGLPGLP. The segment covering 130-139 has biased composition (gly residues); sequence GPPGGIGLRG. Composition is skewed to pro residues over residues 140-161 and 177-188; these read PPGP…PPGH and ICPPGPPGPPGM. Residues 200–212 are compositionally biased toward basic and acidic residues; the sequence is EQGEVGKDGEKGD. The span at 221–237 shows a compositional bias: low complexity; it reads LPGSVGLQGPRGLRGLP. 2 stretches are compositionally biased toward basic and acidic residues: residues 264–282 and 344–356; these read AGDR…KGDL and SKGE…RAGE. Residues 423 to 425 carry the Cell attachment site motif; sequence RGD. A glycan (N-linked (GlcNAc...) asparagine) is linked at Asn483. Positions 498 to 507 are enriched in low complexity; it reads LGLQGVPGVP. The interval 520-550 is nonhelical region 3 (NC3); sequence ASEQRIRELCGGMISEQIAQLAAHLRKPLAP. Residues 551–630 are triple-helical region 2 (COL2); the sequence is GSIGRPGPAG…QGPQGVPGTS (80 aa). A compositionally biased stretch (pro residues) spans 558 to 568; the sequence is PAGPPGPPGPP. Positions 570 to 586 are enriched in low complexity; sequence SIGHPGARGPPGYRGPT. The Cell attachment site signature appears at 601–603; sequence RGD. The segment covering 617 to 628 has biased composition (low complexity); that stretch reads DQGPQGPQGVPG. The interval 631–632 is nonhelical region 2 (NC2); it reads KD. Residues 633–661 form a triple-helical region 1 (COL1) region; that stretch reads GQDGAPGEPGPPGDPGLPGAIGAQGTPGI. The tract at residues 662–684 is nonhelical region 1 (NC1); that stretch reads CDTSACQGAVLGGVGEKSGSRSS.

Belongs to the fibril-associated collagens with interrupted helices (FACIT) family. As to quaternary structure, heterotrimer of an alpha 1(IX), an alpha 2(IX) and an alpha 3(IX) chain. Post-translationally, covalently linked to the telopeptides of type II collagen by lysine-derived cross-links. Prolines at the third position of the tripeptide repeating unit (G-X-Y) are hydroxylated in some or all of the chains.

It is found in the secreted. It localises to the extracellular space. The protein localises to the extracellular matrix. In terms of biological role, structural component of hyaline cartilage and vitreous of the eye. The chain is Collagen alpha-3(IX) chain (COL9A3) from Homo sapiens (Human).